The sequence spans 220 residues: 2-dehydro-3-deoxy-phosphogluconate aldolase (220 aa).

Glu48 serves as the catalytic Proton acceptor. Pyruvate is bound by residues Arg52, Thr76, and Lys136. Residue Lys136 is the Schiff-base intermediate with substrate of the active site.

The protein belongs to the KHG/KDPG aldolase family. As to quaternary structure, homotrimer.

The enzyme catalyses 2-dehydro-3-deoxy-6-phospho-D-gluconate = D-glyceraldehyde 3-phosphate + pyruvate. Its pathway is carbohydrate acid metabolism; 2-dehydro-3-deoxy-D-gluconate degradation; D-glyceraldehyde 3-phosphate and pyruvate from 2-dehydro-3-deoxy-D-gluconate: step 2/2. Its function is as follows. Involved in the degradation of glucose via the Entner-Doudoroff pathway. Catalyzes the reversible, stereospecific retro-aldol cleavage of 2-keto-3-deoxy-6-phosphogluconate (KDPG) to pyruvate and D-glyceraldehyde-3-phosphate. This chain is 2-dehydro-3-deoxy-phosphogluconate aldolase (eda), found in Pseudomonas aeruginosa (strain ATCC 15692 / DSM 22644 / CIP 104116 / JCM 14847 / LMG 12228 / 1C / PRS 101 / PAO1).